A 247-amino-acid polypeptide reads, in one-letter code: UPF0309 protein GWCH70_1414 (247 aa).

The region spanning 31–214 (VSEAIQKGGI…VLMAENGFEP (184 aa)) is the SIS domain.

This sequence belongs to the UPF0309 family.

The chain is UPF0309 protein GWCH70_1414 from Geobacillus sp. (strain WCH70).